The chain runs to 737 residues: Polyribonucleotide nucleotidyltransferase (737 aa).

The Mg(2+) site is built by aspartate 489 and aspartate 495. In terms of domain architecture, KH spans 556–615; it reads PKIDTIKIDVDKIKIVIGKGGETIDKIIAETGVKIDIDEEGNVSIYSSDQDAINRAKEII. The S1 motif domain maps to 625–693; that stretch reads DEVYRAKVVR…EKGRIDASMK (69 aa). A disordered region spans residues 691 to 737; that stretch reads SMKALLPRPPKPEHDEKGEKSERPHRPRHHKDHKPKKEFTETPKDSE. Residues 700 to 714 show a composition bias toward basic and acidic residues; it reads PKPEHDEKGEKSERP. Residues 715 to 724 show a composition bias toward basic residues; it reads HRPRHHKDHK. Basic and acidic residues predominate over residues 725-737; sequence PKKEFTETPKDSE.

Belongs to the polyribonucleotide nucleotidyltransferase family. Mg(2+) serves as cofactor.

It is found in the cytoplasm. It carries out the reaction RNA(n+1) + phosphate = RNA(n) + a ribonucleoside 5'-diphosphate. Its function is as follows. Involved in mRNA degradation. Catalyzes the phosphorolysis of single-stranded polyribonucleotides processively in the 3'- to 5'-direction. This is Polyribonucleotide nucleotidyltransferase from Streptococcus pneumoniae (strain Taiwan19F-14).